The chain runs to 237 residues: Ribosomal RNA small subunit methyltransferase G (237 aa).

S-adenosyl-L-methionine-binding positions include glycine 76, phenylalanine 81, 128–129 (VE), and arginine 147.

Belongs to the methyltransferase superfamily. RNA methyltransferase RsmG family.

Its subcellular location is the cytoplasm. Its function is as follows. Specifically methylates the N7 position of a guanine in 16S rRNA. The sequence is that of Ribosomal RNA small subunit methyltransferase G from Prochlorococcus marinus (strain MIT 9215).